The sequence spans 235 residues: Transcription factor MYB59 (235 aa).

2 consecutive HTH myb-type domains span residues 5 to 57 and 58 to 112; these read QEEY…VNYL and HPGL…RKKA. Residues 33–57 constitute a DNA-binding region (H-T-H motif); sequence WDFVAKVSGLNRTGKSCRLRWVNYL. Residues 62–65 carry the Bipartite nuclear localization signal 1 motif; the sequence is KRGK. The segment at residues 85–108 is a DNA-binding region (H-T-H motif); the sequence is WSKIARKLPGRTDNEIKNYWRTHM. A Bipartite nuclear localization signal 2 motif is present at residues 109–117; that stretch reads RKKAQEKKR. Residues 109–147 are disordered; the sequence is RKKAQEKKRPMSPTSSSSNCCSSSMTTTTSQDTGGSNGK. Residues 119–138 are compositionally biased toward low complexity; that stretch reads MSPTSSSSNCCSSSMTTTTS.

In terms of tissue distribution, mainly expressed in leaves and seedlings, and to a lower extent, in roots, stems and inflorescences. Isoform MYB59-1 and isoform MYB59-2 are present in roots, leaves, and seedlings, while the expression of isoform MYB59-3 and isoform MYB59-4 is confined to seedlings.

The protein localises to the nucleus. Its function is as follows. Transcription factor. The polypeptide is Transcription factor MYB59 (MYB59) (Arabidopsis thaliana (Mouse-ear cress)).